Reading from the N-terminus, the 308-residue chain is Probable peptidyl-prolyl cis-trans isomerase B (308 aa).

A disordered region spans residues 74 to 123; it reads DHQSTTSATPTDSASTSPPQAATAPPLPPFKPSANLGANCQYPPSPDKAV. Over residues 77-97 the composition is skewed to low complexity; sequence STTSATPTDSASTSPPQAATA. Positions 139-307 constitute a PPIase cyclophilin-type domain; the sequence is AQVSVSMVTN…TEVTITSVLL (169 aa).

Belongs to the cyclophilin-type PPIase family.

It catalyses the reaction [protein]-peptidylproline (omega=180) = [protein]-peptidylproline (omega=0). In terms of biological role, PPIases accelerate the folding of proteins. It catalyzes the cis-trans isomerization of proline imidic peptide bonds in oligopeptides. The chain is Probable peptidyl-prolyl cis-trans isomerase B (ppiB) from Mycobacterium tuberculosis (strain CDC 1551 / Oshkosh).